The chain runs to 96 residues: UPF0102 protein ML1607 (96 aa).

This sequence belongs to the UPF0102 family.

This chain is UPF0102 protein ML1607, found in Mycobacterium leprae (strain TN).